The chain runs to 64 residues: MMIPVRCFTCGTVIGEHWDEFKQRARDGNEDPGEVLDDLGIKRHCCRRMMVSHRDLVDVVAPYQ.

Cys-7, Cys-10, Cys-45, and Cys-46 together coordinate Zn(2+).

This sequence belongs to the archaeal Rpo10/eukaryotic RPB10 RNA polymerase subunit family. As to quaternary structure, part of the RNA polymerase complex. Zn(2+) serves as cofactor.

It is found in the cytoplasm. The catalysed reaction is RNA(n) + a ribonucleoside 5'-triphosphate = RNA(n+1) + diphosphate. Functionally, DNA-dependent RNA polymerase (RNAP) catalyzes the transcription of DNA into RNA using the four ribonucleoside triphosphates as substrates. This chain is DNA-directed RNA polymerase subunit Rpo10, found in Haloquadratum walsbyi (strain DSM 16790 / HBSQ001).